The chain runs to 649 residues: Transcription factor tau 95 kDa subunit (649 aa).

Residues 1-21 (MPVEEPLATLSSIPDSSADQA) form a disordered region. Residues 9–19 (TLSSIPDSSAD) are compositionally biased toward polar residues. Copy 1 of the repeat occupies 221–239 (PSTDFQLPPPPKLSMVGFP). Positions 221–419 (PSTDFQLPPP…PPLVFESDTP (199 aa)) are 2 X repeats, Pro-rich. Positions 296–300 (AKKTK) match the Nuclear localization signal motif. Copy 2 of the repeat occupies 400–419 (PIVKKNVPKPPPLVFESDTP). The interval 556–612 (IAAGDDFDDNGAITEEPDDAALENEEMDTDQNLKVPASIDDDVDDVDADEEEQESFD) is disordered. Composition is skewed to acidic residues over residues 560–584 (DDFD…EMDT) and 594–610 (IDDD…EQES). Serine 617 bears the Phosphoserine mark.

It belongs to the TFIIIC subunit 5 family. As to quaternary structure, component of the TFIIIC complex composed of TFC1, TFC3, TFC4, TFC6, TFC7 and TFC8. The subunits are organized in two globular domains, tauA and tauB, connected by a proteolysis-sensitive and flexible linker. Interacts with TFC3, TFC4 and TFC6.

It is found in the nucleus. TFIIIC mediates tRNA and 5S RNA gene activation by binding to intragenic promoter elements. Upstream of the transcription start site, TFIIIC assembles the initiation complex TFIIIB-TFIIIC-tDNA, which is sufficient for RNA polymerase III recruitment and function. Part of the tauA domain of TFIIIC that binds boxA DNA promoter sites of tRNA and similar genes. Participates in the interconnection of tauA with tauB via its contacts with TFC3 and TFC6. Serves as a scaffold critical for tauA-DNA spatial configuration and tauB-DNA stability. The sequence is that of Transcription factor tau 95 kDa subunit (TFC1) from Saccharomyces cerevisiae (strain ATCC 204508 / S288c) (Baker's yeast).